A 485-amino-acid chain; its full sequence is NADH-quinone oxidoreductase subunit N (485 aa).

Helical transmembrane passes span 8-28, 35-55, 71-91, 105-125, 127-147, 159-179, 203-223, 235-255, 271-291, 297-317, 326-346, 373-393, 408-430, and 455-475; these read LIALLPLLIVGLTVVVVMLSI, FLNATLSVIGLNAALVSLWFV, GFAMLYTGLVLLASLATCTFA, FYLLVLIAALGGILLANANHL, SLFLGIELISLPLFGLVGYAF, YTILSAAASSFLLFGMALVYA, LLAGFGLMIVGLGFKLSLVPF, PAPVSTFLATASKIAIFGVVM, VVLAIIAFASIIFGNLMALSQ, LLGYSSISHLGYLLVALIALQ, VGVYLAGYLFSSLGAFGVVSL, AAVMTVMMLSLAGIPMTLGFI, WWLVGAVVVGSASGLYYYLRVAV, and IVVLISALLVLVLGVWPQPLI.

It belongs to the complex I subunit 2 family. As to quaternary structure, NDH-1 is composed of 13 different subunits. Subunits NuoA, H, J, K, L, M, N constitute the membrane sector of the complex.

Its subcellular location is the cell inner membrane. It catalyses the reaction a quinone + NADH + 5 H(+)(in) = a quinol + NAD(+) + 4 H(+)(out). NDH-1 shuttles electrons from NADH, via FMN and iron-sulfur (Fe-S) centers, to quinones in the respiratory chain. The immediate electron acceptor for the enzyme in this species is believed to be ubiquinone. Couples the redox reaction to proton translocation (for every two electrons transferred, four hydrogen ions are translocated across the cytoplasmic membrane), and thus conserves the redox energy in a proton gradient. The sequence is that of NADH-quinone oxidoreductase subunit N from Shigella sonnei (strain Ss046).